The chain runs to 316 residues: tRNA dimethylallyltransferase (316 aa).

27–34 serves as a coordination point for ATP; the sequence is GATATGKT. 29–34 contacts substrate; sequence TATGKT. The segment at 52-55 is interaction with substrate tRNA; that stretch reads DSRQ.

This sequence belongs to the IPP transferase family. In terms of assembly, monomer. The cofactor is Mg(2+).

It carries out the reaction adenosine(37) in tRNA + dimethylallyl diphosphate = N(6)-dimethylallyladenosine(37) in tRNA + diphosphate. Its function is as follows. Catalyzes the transfer of a dimethylallyl group onto the adenine at position 37 in tRNAs that read codons beginning with uridine, leading to the formation of N6-(dimethylallyl)adenosine (i(6)A). The polypeptide is tRNA dimethylallyltransferase (Treponema pallidum (strain Nichols)).